Here is a 265-residue protein sequence, read N- to C-terminus: MMRALWTAASGMTAQQYNVDTIANNLSNVNTTGFKKIRAEFEDLIYQTHNRAGTPATENTLRPLGNQVGHGTKIAATQRIFEQGKMQSTNLLTDVAIEGDGFYKILLPDGTYAYTRDGSFKIDSNRELVTSQGYKVLPNILFPEEYIQNSITISEEGIVSVKIDTSNEPIELGQIEISRFINPAGLSAIGSNLFKETAGSGQEIAGIPGSEGMGRLRQGILEMSNVSIAEEMVTMIVAQRAYEINSKAIQTSDNMLGIANNLKRQ.

It belongs to the flagella basal body rod proteins family. The basal body constitutes a major portion of the flagellar organelle and consists of four rings (L,P,S, and M) mounted on a central rod. The rod consists of about 26 subunits of FlgG in the distal portion, and FlgB, FlgC and FlgF are thought to build up the proximal portion of the rod with about 6 subunits each.

It localises to the bacterial flagellum basal body. In Borreliella burgdorferi (strain ATCC 35210 / DSM 4680 / CIP 102532 / B31) (Borrelia burgdorferi), this protein is Flagellar basal-body rod protein FlgG (flgG).